Consider the following 524-residue polypeptide: Solute carrier family 2, facilitated glucose transporter member 2 (524 aa).

Residues Met1–Ile6 lie on the Cytoplasmic side of the membrane. A helical transmembrane segment spans residues Thr7 to Tyr26. At Asp27 to Ser89 the chain is on the extracellular side. Residue Asn62 is glycosylated (N-linked (GlcNAc...) asparagine). A helical transmembrane segment spans residues Ala90–Gly115. Topologically, residues Gly116–Lys126 are cytoplasmic. The chain crosses the membrane as a helical span at residues Ala127–Ser145. Topologically, residues Lys146–Ser150 are extracellular. The chain crosses the membrane as a helical span at residues His151–Ile176. The Cytoplasmic portion of the chain corresponds to Gly177–Ala187. The chain crosses the membrane as a helical span at residues Ile188–Leu211. Gln193 is a D-glucose binding site. The Extracellular segment spans residues Leu212–Glu216. Residues Leu217–Cys239 traverse the membrane as a helical segment. Topologically, residues Pro240–Pro303 are cytoplasmic. The chain crosses the membrane as a helical span at residues Ile304–Thr327. Residues Gln314–Gln315 and Asn320 each bind D-glucose. The Extracellular segment spans residues Ser328–Pro338. Residues Val339 to Val360 form a helical membrane-spanning segment. Position 349 (Asn349) interacts with D-glucose. At Glu361–Arg366 the chain is on the cytoplasmic side. A helical transmembrane segment spans residues Ser367–Leu389. Residues Leu390 to Pro394 are Extracellular-facing. The helical transmembrane segment at Trp395–Ile413 threads the bilayer. D-glucose is bound by residues Glu412 and Trp420. The Cytoplasmic segment spans residues Gly414–Pro433. Residues Ala434–Ala458 traverse the membrane as a helical segment. At Asp459 to Pro463 the chain is on the extracellular side. Residues Tyr464–Phe482 traverse the membrane as a helical segment. Residues Lys483–Val524 are Cytoplasmic-facing. Residue Thr523 is modified to Phosphothreonine.

It belongs to the major facilitator superfamily. Sugar transporter (TC 2.A.1.1) family. Glucose transporter subfamily. Post-translationally, N-glycosylated; required for stability and retention at the cell surface of pancreatic beta cells.

It localises to the cell membrane. The catalysed reaction is D-glucose(out) = D-glucose(in). It catalyses the reaction D-fructose(out) = D-fructose(in). It carries out the reaction L-dehydroascorbate(out) = L-dehydroascorbate(in). The enzyme catalyses D-galactose(in) = D-galactose(out). With respect to regulation, D-glucose and maltose competitively inhibit fructose transport. D-glucose, D-fructose and maltose inhibit deoxyglucose transport. Facilitative hexose transporter that mediates the transport of glucose, fructose and galactose. Likely mediates the bidirectional transfer of glucose across the plasma membrane of hepatocytes and is responsible for uptake of glucose by the beta cells; may comprise part of the glucose-sensing mechanism of the beta cell. May also participate with the Na(+)/glucose cotransporter in the transcellular transport of glucose in the small intestine and kidney. Also able to mediate the transport of dehydroascorbate. The chain is Solute carrier family 2, facilitated glucose transporter member 2 from Sus scrofa (Pig).